The primary structure comprises 125 residues: Protein ApaG (125 aa).

In terms of domain architecture, ApaG spans 1 to 125 (MINSPRVCVQ…FRLAIPSLIN (125 aa)).

The sequence is that of Protein ApaG from Sodalis glossinidius (strain morsitans).